A 197-amino-acid chain; its full sequence is Putative peptidyl-prolyl cis-trans isomerase (197 aa).

Residues 14-195 form the PPIase cyclophilin-type domain; that stretch reads NEIKVVMHTN…YDVVIESIDV (182 aa).

It belongs to the cyclophilin-type PPIase family.

The enzyme catalyses [protein]-peptidylproline (omega=180) = [protein]-peptidylproline (omega=0). In terms of biological role, PPIases accelerate the folding of proteins. It catalyzes the cis-trans isomerization of proline imidic peptide bonds in oligopeptides. The polypeptide is Putative peptidyl-prolyl cis-trans isomerase (Staphylococcus epidermidis (strain ATCC 35984 / DSM 28319 / BCRC 17069 / CCUG 31568 / BM 3577 / RP62A)).